A 1227-amino-acid polypeptide reads, in one-letter code: RNA-binding protein 20 (1227 aa).

Disordered stretches follow at residues 1–58 (MVLA…QAGL) and 289–374 (GSHV…SKQG). Residues 27-42 (PGARASPAPSGPRGMQ) show a composition bias toward low complexity. The span at 43-56 (QPPPPPQPPPPPQA) shows a compositional bias: pro residues. Residues 313-331 (QGTNSQWESPHGFSGQSKP) are compositionally biased toward polar residues. The U1-type zinc finger occupies 409 to 443 (HLPHICSICDKKVFDLKDWELHVKGKLHAQKCLVF). Residue Ser-498 is modified to Phosphoserine. Residues 518–593 (RVVHICNLPE…EKLLIRMSKR (76 aa)) form the RRM domain. Positions 624–634 (EADRYGPERPR) are enriched in basic and acidic residues. Disordered regions lie at residues 624–906 (EADR…TNME) and 977–1089 (SLKS…ASPP). The segment at 628-655 (YGPERPRSRSPVSRSLSPRSHTPSFTSC) is RS. Phosphoserine is present on residues Ser-635, Ser-637, Ser-640, Ser-642, Ser-660, and Ser-679. The segment covering 636 to 660 (RSPVSRSLSPRSHTPSFTSCSSSHS) has biased composition (low complexity). 2 stretches are compositionally biased toward basic and acidic residues: residues 674–709 (DSWEHSPYARREEERDPAPWRDNGDDKRDRMDPWAH) and 716–738 (RQLDKAELDERPEGGRPHREKYP). The span at 741–752 (GSPNLPHSVSSY) shows a compositional bias: polar residues. Ser-742 is modified (phosphoserine). Basic and acidic residues-rich tracts occupy residues 753–772 (KSREDGYYRKEPKAKSDKYL), 784–807 (RKDEARLRESRHPHPDDSGKEDGL), and 816–856 (EGAK…KEEQ). Ser-801 bears the Phosphoserine mark. 7 positions are modified to phosphoserine: Ser-865, Ser-876, Ser-891, Ser-893, Ser-977, Ser-980, and Ser-1013. A compositionally biased stretch (basic and acidic residues) spans 868 to 888 (RQEKEAEFSDPENTRTKKEQD). Residues 1024–1036 (CYEKEAKGVESSD) show a composition bias toward basic and acidic residues. Phosphoserine is present on residues Ser-1048, Ser-1060, Ser-1080, Ser-1115, and Ser-1120. Residues 1161-1192 (FYCKLCGLFYTSEETAKMSHCRSAVHYRNLQK) form a Matrin-type zinc finger. A compositionally biased stretch (basic and acidic residues) spans 1201–1215 (GLKETEGADSPRPED). The segment at 1201–1227 (GLKETEGADSPRPEDSGIVPRFERKKL) is disordered. Ser-1210 carries the post-translational modification Phosphoserine.

As to quaternary structure, associates with components of the U1 and U2 U1 small nuclear ribonucleoprotein complexes. In terms of processing, phosphorylation regulates the subcellular localization. Phosphorylation of Ser-635 and Ser-637 in the RS (arginine/serine-rich) region promotes nuclear localization of the protein. In contrast, phosphorylation of the C-terminal disordered region promotes localization to cytoplasmic ribonucleoprotein granules. As to expression, mainly expressed in the heart. Also expressed in skeletal muscle tissues, ovary, small intestine and colon.

It is found in the nucleus. The protein resides in the cytoplasm. It localises to the cytoplasmic ribonucleoprotein granule. In terms of biological role, RNA-binding protein that acts as a regulator of mRNA splicing of a subset of genes encoding key structural proteins involved in cardiac development, such as TTN (Titin), CACNA1C, CAMK2D or PDLIM5/ENH. Acts as a repressor of mRNA splicing: specifically binds the 5'UCUU-3' motif that is predominantly found within intronic sequences of pre-mRNAs, leading to the exclusion of specific exons in target transcripts. RBM20-mediated exon skipping is hormone-dependent and is essential for TTN isoform transition in both cardiac and skeletal muscles. RBM20-mediated exon skipping of TTN provides substrates for the formation of circular RNA (circRNAs) from the TTN transcripts. Together with RBM24, promotes the expression of short isoforms of PDLIM5/ENH in cardiomyocytes. This is RNA-binding protein 20 from Homo sapiens (Human).